A 640-amino-acid chain; its full sequence is Probable threonine--tRNA ligase, cytoplasmic (640 aa).

In terms of domain architecture, TGS spans 1–63 (MYEVKLKVEL…LKDCKLELMT (63 aa)).

The protein belongs to the class-II aminoacyl-tRNA synthetase family.

Its subcellular location is the cytoplasm. The enzyme catalyses tRNA(Thr) + L-threonine + ATP = L-threonyl-tRNA(Thr) + AMP + diphosphate + H(+). In Encephalitozoon cuniculi (strain GB-M1) (Microsporidian parasite), this protein is Probable threonine--tRNA ligase, cytoplasmic.